Reading from the N-terminus, the 468-residue chain is Beta-monoglucosyldiacylglycerol synthase (468 aa).

4 helical membrane passes run 51–71 (AALVLTIVWSGTIALHLVSWG), 72–92 (SIFILGLTTVLGIHALGVVFA), 358–378 (MLMFMLTMYILPTAAIPDLLM), and 387–407 (MLGPVTGLSVTMSVVGMFAGL).

Belongs to the glycosyltransferase 2 family. The cofactor is Mg(2+).

It localises to the membrane. The catalysed reaction is a 1,2-diacyl-sn-glycerol + UDP-alpha-D-glucose = a 1,2-diacyl-3-O-(beta-D-glucopyranosyl)-sn-glycerol + UDP + H(+). Functionally, glucosyltransferase involved in the biosynthesis of the non-bilayer-forming membrane lipid beta-monoglucosyldiacylglycerol which contributes to regulate the properties and stability of the membrane. Catalyzes the transfer of a glucosyl residue from UDP-Glc to diacylglycerol (DAG) acceptor to form the corresponding beta-glucosyl-DAG (1,2-diacyl-3-O-(beta-D-glucopyranosyl)-sn-glycerol). It can only use UDP-Glc as sugar donor. Two types of DAG (dipalmitoyl-DAG (DPDAG) and 1-oleoyl-2-palmitoyl-DAG (OPDAG)) can be used as sugar acceptors, but OPDAG is preferred. This chain is Beta-monoglucosyldiacylglycerol synthase, found in Nostoc sp. (strain PCC 7120 / SAG 25.82 / UTEX 2576).